We begin with the raw amino-acid sequence, 851 residues long: Periplasmic nitrate reductase (851 aa).

The segment at residues 1–29 (MQSNRRDFLKAQALAASAAAAGIPIVVEA) is a signal peptide (tat-type signal). A 4Fe-4S Mo/W bis-MGD-type domain is found at 44–100 (VRWDKAPCRFCGTGCAVMVGVQEGKVVATQGDPEAPVNRGLNCIKGYFLSKIMYGRD). The [4Fe-4S] cluster site is built by Cys-51, Cys-54, Cys-58, and Cys-86. Residues Lys-88, Gln-155, Asn-180, Cys-184, 217 to 224 (WGSNMAEM), 248 to 252 (STYEH), and 267 to 269 (QTD) contribute to the Mo-bis(molybdopterin guanine dinucleotide) site. Residues 317-338 (DATSNGYPGADGKPKGNPNDST) form a disordered region. Mo-bis(molybdopterin guanine dinucleotide)-binding positions include Met-388, Gln-392, Asn-498, 524 to 525 (SD), Lys-547, Asp-574, and 741 to 750 (TGRVLEHWHT). Phe-817 is a binding site for substrate. Residues Asn-825 and Lys-842 each coordinate Mo-bis(molybdopterin guanine dinucleotide).

The protein belongs to the prokaryotic molybdopterin-containing oxidoreductase family. NasA/NapA/NarB subfamily. In terms of assembly, component of the periplasmic nitrate reductase NapAB complex composed of NapA and NapB. It depends on [4Fe-4S] cluster as a cofactor. Mo-bis(molybdopterin guanine dinucleotide) serves as cofactor. Post-translationally, predicted to be exported by the Tat system. The position of the signal peptide cleavage has not been experimentally proven.

The protein resides in the periplasm. The enzyme catalyses 2 Fe(II)-[cytochrome] + nitrate + 2 H(+) = 2 Fe(III)-[cytochrome] + nitrite + H2O. Its function is as follows. Catalytic subunit of the periplasmic nitrate reductase complex NapAB. Receives electrons from NapB and catalyzes the reduction of nitrate to nitrite. The polypeptide is Periplasmic nitrate reductase (Leptothrix cholodnii (strain ATCC 51168 / LMG 8142 / SP-6) (Leptothrix discophora (strain SP-6))).